We begin with the raw amino-acid sequence, 1707 residues long: Histone-lysine N-methyltransferase SETD1A (1707 aa).

The interaction with WDR82 stretch occupies residues 60–89; it reads LQDPRCHVRSKNRDFSLPVPKFKLDEFYIG. In terms of domain architecture, RRM spans 84-172; that stretch reads DEFYIGQIPL…NIIHAQLDIK (89 aa). 7 disordered regions span residues 194-308, 331-363, 381-486, 506-655, 834-854, 891-1251, and 1264-1293; these read PTGG…YQDA, TAAT…RSSD, SYPP…AQHS, LASD…PPPH, AKPF…EKTK, PSFK…GTEV, and ARRG…RPLL. Residues 239–277 are compositionally biased toward polar residues; it reads NGTPCSQDTSFSSSRQDTPSSFGQFTPQSSQGTPYTSRG. 2 stretches are compositionally biased toward low complexity: residues 278-295 and 331-357; these read STPY…TSTS and TAAT…SSSS. Positions 430–440 are enriched in pro residues; it reads SEAPPPEPPEP. Phosphoserine is present on residues Ser459 and Ser464. Over residues 459-473 the composition is skewed to low complexity; sequence SPRPASPARSGSPAP. Polar residues predominate over residues 474 to 486; that stretch reads ETTNESVPFAQHS. A phosphoserine mark is found at Ser508 and Ser565. Positions 568 to 578 are enriched in polar residues; sequence ANGQNQASPCS. Composition is skewed to pro residues over residues 593–617 and 624–655; these read SPPP…PPPY and GYPP…PPPH. Positions 844–854 are enriched in basic and acidic residues; it reads QAKEEDKEKTK. Ser915 carries the post-translational modification Phosphoserine. Composition is skewed to acidic residues over residues 918 to 927 and 976 to 992; these read AEEDEDDPEQ and KDEE…DREE. Basic and acidic residues predominate over residues 993 to 1002; it reads AVDTTKKETE. A compositionally biased stretch (acidic residues) spans 1003-1012; it reads VSDGEDEESD. Positions 1032 to 1060 are enriched in low complexity; sequence DSESSSSSSSSSSSSSSSSSSSSSSSSES. The segment covering 1077–1094 has biased composition (pro residues); the sequence is ASPPPREVPVPTPAPVEV. Position 1103 is a phosphoserine (Ser1103). A compositionally biased stretch (pro residues) spans 1127 to 1145; that stretch reads PSAPLRPPEPPAGPPAPAP. The segment covering 1275-1284 has biased composition (acidic residues); the sequence is EDSEATETSD. The HCFC1-binding motif (HBM) motif lies at 1299 to 1303; that stretch reads EHNYA. Disordered stretches follow at residues 1307 to 1417 and 1472 to 1499; these read KPTP…AYEP and NLTT…SEGY. Residues 1308–1323 show a composition bias toward pro residues; it reads PTPPAPALRPPEPVPA. A compositionally biased stretch (acidic residues) spans 1360 to 1377; sequence EGEEEGEEEGEEEEEESS. Residues 1390–1403 show a composition bias toward basic residues; that stretch reads RRRSLRSHARRRRP. A compositionally biased stretch (pro residues) spans 1404–1414; sequence PPPPPPPPPRA. The interval 1415-1450 is interaction with CFP1; the sequence is YEPRSEFEQMTILYDIWNSGLDSEDMSYLRLTYERL. The interval 1450 to 1537 is interaction with ASH2L, RBBP5 and WDR5; sequence LLQQTSGADW…GTNRVLSERR (88 aa). Positions 1492-1497 match the WDR5 interaction motif (WIN) motif; the sequence is GSARSE. Positions 1537–1542 match the RxxxRR motif motif; that stretch reads RSEQRR. The SET domain maps to 1568 to 1685; it reads KKLRFGRSRI…VDEEITYDYK (118 aa). Residue Tyr1684 participates in S-adenosyl-L-methionine binding. The region spanning 1691-1707 is the Post-SET domain; that stretch reads NKIPCLCGTESCRGSLN.

This sequence belongs to the class V-like SAM-binding methyltransferase superfamily. As to quaternary structure, component of the SET1A/COMPASS complex composed of the catalytic subunit SETD1A, WDR5, WDR82, RBBP5, ASH2L/ASH2, CXXC1/CFP1, HCFC1 and DPY30 homotrimer. Forms a core complex with the evolutionary conserved subcomplex WRAD composed of WDR5, RBBP5, ASH2L/ASH2 and DPY30 subunits; WRAD differentially stimulates the methyltransferase activity. Interacts with BOD1L1 (via COMPASS-Shg1 domain) at replication forks. Interacts with HCFC1. Interacts with ASH2/ASH2L. Interacts with CXXC1/CFP1. Interacts with RBBP5. Interacts (via N-terminal region) with WDR82; the interaction is direct. Interacts (via the RRM domain) with hyperphosphorylated C-terminal domain (CTD) of RNA polymerase II large subunit (POLR2A) only in the presence of WDR82. Binds specifically to CTD heptad repeats phosphorylated on 'Ser-5' of each heptad. Interacts with ZNF335. Interacts with SUPT6H. Interacts with NAP1L1. Interacts (via WIN motif) with WDR5.

It is found in the nucleus speckle. It localises to the chromosome. The protein resides in the cytoplasm. The enzyme catalyses L-lysyl(4)-[histone H3] + S-adenosyl-L-methionine = N(6)-methyl-L-lysyl(4)-[histone H3] + S-adenosyl-L-homocysteine + H(+). It carries out the reaction N(6)-methyl-L-lysyl(4)-[histone H3] + S-adenosyl-L-methionine = N(6),N(6)-dimethyl-L-lysyl(4)-[histone H3] + S-adenosyl-L-homocysteine + H(+). The catalysed reaction is N(6),N(6)-dimethyl-L-lysyl(4)-[histone H3] + S-adenosyl-L-methionine = N(6),N(6),N(6)-trimethyl-L-lysyl(4)-[histone H3] + S-adenosyl-L-homocysteine + H(+). Functionally, histone methyltransferase that catalyzes methyl group transfer from S-adenosyl-L-methionine to the epsilon-amino group of 'Lys-4' of histone H3 (H3K4) via a non-processive mechanism. Part of chromatin remodeling machinery, forms H3K4me1, H3K4me2 and H3K4me3 methylation marks at active chromatin sites where transcription and DNA repair take place. Responsible for H3K4me3 enriched promoters and transcriptional programming of inner mass stem cells and neuron progenitors during embryogenesis. Required for H3K4me1 mark at stalled replication forks. Mediates FANCD2-dependent nucleosome remodeling and RAD51 nucleofilaments stabilization at reversed forks, protecting them from nucleolytic degradation. Does not methylate 'Lys-4' of histone H3 if the neighboring 'Lys-9' residue is already methylated. Binds RNAs involved in RNA processing and the DNA damage response. The polypeptide is Histone-lysine N-methyltransferase SETD1A (SETD1A) (Homo sapiens (Human)).